We begin with the raw amino-acid sequence, 404 residues long: Glucose-1-phosphate adenylyltransferase (404 aa).

Alpha-D-glucose 1-phosphate-binding positions include tyrosine 99, glycine 164, 179-180, and serine 197; that span reads EK.

The protein belongs to the bacterial/plant glucose-1-phosphate adenylyltransferase family. In terms of assembly, homotetramer.

It catalyses the reaction alpha-D-glucose 1-phosphate + ATP + H(+) = ADP-alpha-D-glucose + diphosphate. Its pathway is glycan biosynthesis; glycogen biosynthesis. Involved in the biosynthesis of ADP-glucose, a building block required for the elongation reactions to produce glycogen. Catalyzes the reaction between ATP and alpha-D-glucose 1-phosphate (G1P) to produce pyrophosphate and ADP-Glc. This is Glucose-1-phosphate adenylyltransferase from Nocardia farcinica (strain IFM 10152).